The primary structure comprises 942 residues: Chitin synthase 2 (942 aa).

Positions 1 to 13 are enriched in basic and acidic residues; sequence MAYHYSHDSDRRQ. The tract at residues 1-132 is disordered; sequence MAYHYSHDSD…PSHTDYSDED (132 aa). The segment covering 18-33 has biased composition (low complexity); sequence YNYPSNYSNPSQYSIP. A glycan (N-linked (GlcNAc...) asparagine) is linked at N23. Polar residues predominate over residues 71–80; that stretch reads PQPTASSMTS. The N-linked (GlcNAc...) asparagine glycan is linked to N587. Helical transmembrane passes span 590 to 610, 625 to 645, 663 to 683, and 696 to 716; these read IFAATYAMVCFWRIWTSGHGI, FNLLFNWLSVSSFYLAFFFLI, IFQVFNKVYIALIFVVLVCSL, and FCIFMFAVCQGILLYCAGWTV. N736 is a glycosylation site (N-linked (GlcNAc...) asparagine). The next 2 helical transmembrane spans lie at 739 to 759 and 770 to 790; these read FVQLALSLMATYGLYLISSLL and FVQYLLLLPSYVNILLIYAMC. N-linked (GlcNAc...) asparagine glycosylation is present at N803. Helical transmembrane passes span 873–893 and 916–936; these read VVLLFLGSNMLIILLFTSSTF and IFYAVLGLSALRFAGCLLYLI.

It belongs to the chitin synthase family. Class III subfamily.

It is found in the cell membrane. The enzyme catalyses [(1-&gt;4)-N-acetyl-beta-D-glucosaminyl](n) + UDP-N-acetyl-alpha-D-glucosamine = [(1-&gt;4)-N-acetyl-beta-D-glucosaminyl](n+1) + UDP + H(+). Its function is as follows. Polymerizes chitin, a structural polymer of the cell wall and septum, by transferring the sugar moiety of UDP-GlcNAc to the non-reducing end of the growing chitin polymer. In Cryptococcus neoformans var. grubii serotype A (strain H99 / ATCC 208821 / CBS 10515 / FGSC 9487) (Filobasidiella neoformans var. grubii), this protein is Chitin synthase 2.